A 356-amino-acid polypeptide reads, in one-letter code: Probable protein phosphatase 2C T23F11.1 (356 aa).

The 264-residue stretch at 23 to 286 (LVGSSCMQGW…DNMTVVLVGL (264 aa)) folds into the PPM-type phosphatase domain. The Mn(2+) site is built by aspartate 59, glycine 60, aspartate 228, and aspartate 277. The segment at 336–356 (NAANQEEEEDDNEPAPANFQV) is disordered.

This sequence belongs to the PP2C family. Mg(2+) is required as a cofactor. Mn(2+) serves as cofactor.

It carries out the reaction O-phospho-L-seryl-[protein] + H2O = L-seryl-[protein] + phosphate. The catalysed reaction is O-phospho-L-threonyl-[protein] + H2O = L-threonyl-[protein] + phosphate. This is Probable protein phosphatase 2C T23F11.1 (ppm-2) from Caenorhabditis elegans.